A 231-amino-acid chain; its full sequence is Nucleoside diphosphate kinase II, chloroplastic (231 aa).

Residues 1 to 62 (MVGATVVSKW…RNSASRRRLR (62 aa)) constitute a chloroplast transit peptide. ATP contacts are provided by Lys-91, Phe-139, Arg-167, Thr-173, Arg-184, and Asn-194. Catalysis depends on His-197, which acts as the Pros-phosphohistidine intermediate.

The protein belongs to the NDK family. In terms of assembly, interacts with PHYA, MPK3 and MPK6. Mg(2+) serves as cofactor. Autophosphorylated.

The protein localises to the plastid. It is found in the chloroplast. It carries out the reaction a 2'-deoxyribonucleoside 5'-diphosphate + ATP = a 2'-deoxyribonucleoside 5'-triphosphate + ADP. The catalysed reaction is a ribonucleoside 5'-diphosphate + ATP = a ribonucleoside 5'-triphosphate + ADP. In terms of biological role, major role in the synthesis of nucleoside triphosphates other than ATP. The ATP gamma phosphate is transferred to the NDP beta phosphate via a ping-pong mechanism, using a phosphorylated active-site intermediate. May activate MPK3 and MPK6. May be involved in the regulation of cellular redox state and hydrogen peroxide-mediated MAP kinase signaling. This chain is Nucleoside diphosphate kinase II, chloroplastic (NDPK2), found in Arabidopsis thaliana (Mouse-ear cress).